The following is a 446-amino-acid chain: tRNA-2-methylthio-N(6)-dimethylallyladenosine synthase (446 aa).

Residues 5–121 enclose the MTTase N-terminal domain; sequence RRFYIQTFGC…LPSLIDDAAS (117 aa). Cys-14, Cys-50, Cys-84, Cys-157, Cys-161, and Cys-164 together coordinate [4Fe-4S] cluster. The Radical SAM core domain maps to 143 to 373; that stretch reads REGRISAFIP…IDLQQEISAE (231 aa). The 64-residue stretch at 376-439 folds into the TRAM domain; that stretch reads RRQVGTVAEV…SATLSGSREG (64 aa).

Belongs to the methylthiotransferase family. MiaB subfamily. In terms of assembly, monomer. The cofactor is [4Fe-4S] cluster.

It is found in the cytoplasm. It catalyses the reaction N(6)-dimethylallyladenosine(37) in tRNA + (sulfur carrier)-SH + AH2 + 2 S-adenosyl-L-methionine = 2-methylsulfanyl-N(6)-dimethylallyladenosine(37) in tRNA + (sulfur carrier)-H + 5'-deoxyadenosine + L-methionine + A + S-adenosyl-L-homocysteine + 2 H(+). Functionally, catalyzes the methylthiolation of N6-(dimethylallyl)adenosine (i(6)A), leading to the formation of 2-methylthio-N6-(dimethylallyl)adenosine (ms(2)i(6)A) at position 37 in tRNAs that read codons beginning with uridine. This Chlorobium luteolum (strain DSM 273 / BCRC 81028 / 2530) (Pelodictyon luteolum) protein is tRNA-2-methylthio-N(6)-dimethylallyladenosine synthase.